The primary structure comprises 138 residues: Putative protein encoded by LINC02912 (138 aa).

The next 2 helical transmembrane spans lie at 32-52 (FALS…CLIC) and 65-85 (CLIN…TISQ). The interval 109 to 138 (SGGQSQHSWPCPERSKNLPQVSKQLRNRAG) is disordered.

The protein localises to the membrane. The sequence is that of Putative protein encoded by LINC02912 from Homo sapiens (Human).